Reading from the N-terminus, the 394-residue chain is Acetate kinase 1 (394 aa).

Residue asparagine 8 coordinates Mg(2+). Lysine 15 is a binding site for ATP. Substrate is bound at residue arginine 90. The active-site Proton donor/acceptor is the aspartate 147. Residues 207 to 211 (HLGSG) and 282 to 284 (DMR) contribute to the ATP site. Glutamate 382 lines the Mg(2+) pocket.

It belongs to the acetokinase family. In terms of assembly, homodimer. Requires Mg(2+) as cofactor. Mn(2+) is required as a cofactor.

The protein resides in the cytoplasm. It catalyses the reaction acetate + ATP = acetyl phosphate + ADP. Its pathway is metabolic intermediate biosynthesis; acetyl-CoA biosynthesis; acetyl-CoA from acetate: step 1/2. Catalyzes the formation of acetyl phosphate from acetate and ATP. Can also catalyze the reverse reaction. The chain is Acetate kinase 1 from Latilactobacillus sakei subsp. sakei (strain 23K) (Lactobacillus sakei subsp. sakei).